A 145-amino-acid chain; its full sequence is Synaptojanin-2-binding protein (145 aa).

At 1-117 (MNGRVDYLVT…GPQGEGEPSG (117 aa)) the chain is on the cytoplasmic side. A PDZ domain is found at 13 to 100 (EINLTRGPSG…AVSLRVQHRL (88 aa)). A helical; Anchor for type IV membrane protein membrane pass occupies residues 118–138 (IPIAMVLVPVFALTMVAAWAF). Topologically, residues 139–145 (MRYRQRL) are mitochondrial intermembrane.

Binds (via the PDZ domain) to isoform 2A of SYNJ2 (via the unique motif in the C-terminus). Interacts (via C-terminus) with RALBP1. Interacts (via PDZ domain) with ACVR2A (via C-terminus) and ACVR2B (via C-terminus). Forms a ternary complex with ACVR2A and RALBP1. Interacts with MAPK12. Interacts with DLL1; enhances DLL1 protein stability, and promotes notch signaling in endothelial cells.

Its subcellular location is the mitochondrion outer membrane. It is found in the cytoplasm. The protein resides in the perinuclear region. Its function is as follows. Regulates endocytosis of activin type 2 receptor kinases through the Ral/RALBP1-dependent pathway and may be involved in suppression of activin-induced signal transduction. This Bos taurus (Bovine) protein is Synaptojanin-2-binding protein.